The primary structure comprises 83 residues: Keratin-associated protein 21-2 (83 aa).

As to quaternary structure, interacts with hair keratins.

Its function is as follows. In the hair cortex, hair keratin intermediate filaments are embedded in an interfilamentous matrix, consisting of hair keratin-associated proteins (KRTAP), which are essential for the formation of a rigid and resistant hair shaft through their extensive disulfide bond cross-linking with abundant cysteine residues of hair keratins. The matrix proteins include the high-sulfur and high-glycine-tyrosine keratins. In Homo sapiens (Human), this protein is Keratin-associated protein 21-2 (KRTAP21-2).